The chain runs to 175 residues: uncharacterized protein (175 aa).

The next 2 helical transmembrane spans lie at 21-41 (IVLD…MGPI) and 50-70 (LVGL…VFVI).

Its subcellular location is the membrane. This is an uncharacterized protein from Saccharomyces cerevisiae (strain ATCC 204508 / S288c) (Baker's yeast).